A 206-amino-acid polypeptide reads, in one-letter code: Ribonuclease HII (206 aa).

Residues 1 to 206 (MKVLGIDEAG…SWATVQKKKQ (206 aa)) enclose the RNase H type-2 domain. 3 residues coordinate a divalent metal cation: Asp7, Glu8, and Asp105.

It belongs to the RNase HII family. It depends on Mn(2+) as a cofactor. Mg(2+) serves as cofactor.

It localises to the cytoplasm. The enzyme catalyses Endonucleolytic cleavage to 5'-phosphomonoester.. Its function is as follows. Endonuclease that specifically degrades the RNA of RNA-DNA hybrids. This chain is Ribonuclease HII (rnhB), found in Methanothermobacter thermautotrophicus (strain ATCC 29096 / DSM 1053 / JCM 10044 / NBRC 100330 / Delta H) (Methanobacterium thermoautotrophicum).